The following is a 344-amino-acid chain: TATA box-binding protein-like 2 (344 aa).

The disordered stretch occupies residues 78–143 (NKDRTVTGNK…SNQLSSETPN (66 aa)). The segment covering 110-120 (GSGLNLNSNSS) has biased composition (low complexity). The span at 134 to 143 (SNQLSSETPN) shows a compositional bias: polar residues.

The protein belongs to the TBP family. In terms of assembly, interacts with TAF3.

The protein localises to the cytoplasm. It localises to the nucleus. Functionally, transcription factor required in complex with TAF3 for the differentiation of myoblasts into myocytes. The complex replaces TFIID at specific promoters at an early stage in the differentiation process. This Rattus norvegicus (Rat) protein is TATA box-binding protein-like 2.